The following is a 144-amino-acid chain: Transmembrane protein 170A (144 aa).

At 1–50 the chain is on the lumenal side; sequence MEREGSGGSGGSAGLLQQILSLKVVPRVGNGTLCPNSTSLCSFPEMWYGV. 2 N-linked (GlcNAc...) asparagine glycosylation sites follow: Asn-30 and Asn-36. Residues 51 to 71 traverse the membrane as a helical segment; that stretch reads FLWALVSSLFFHVPAGLLALF. Residues 72-85 lie on the Cytoplasmic side of the membrane; it reads TLRHHKYGRFMSVS. A helical transmembrane segment spans residues 86 to 106; it reads ILLMGIVGPITAGILTSAAIA. The Lumenal segment spans residues 107–116; sequence GVYRAAGKEM. The helical transmembrane segment at 117-137 threads the bilayer; sequence IPFEALTLGTGQTFCVLVVSF. Over 138 to 144 the chain is Cytoplasmic; it reads LRILATL.

This sequence belongs to the TMEM170 family. In terms of assembly, interacts with RTN4.

It is found in the endoplasmic reticulum membrane. The protein resides in the nucleus envelope. Functionally, acts as a regulator of endoplasmic reticulum (ER) and nuclear envelope (NE) morphogenesis. Affects the ratio between tubular ER and ER sheets by promoting sheet formation at the expense of tubules. Influences NE expansion, nuclear pore complex formation and proper localization of inner nuclear membrane proteins. This is Transmembrane protein 170A (TMEM170A) from Homo sapiens (Human).